The primary structure comprises 289 residues: ATP synthase gamma chain (289 aa).

It belongs to the ATPase gamma chain family. F-type ATPases have 2 components, CF(1) - the catalytic core - and CF(0) - the membrane proton channel. CF(1) has five subunits: alpha(3), beta(3), gamma(1), delta(1), epsilon(1). CF(0) has three main subunits: a, b and c.

The protein resides in the cell inner membrane. Its function is as follows. Produces ATP from ADP in the presence of a proton gradient across the membrane. The gamma chain is believed to be important in regulating ATPase activity and the flow of protons through the CF(0) complex. The sequence is that of ATP synthase gamma chain from Cereibacter sphaeroides (strain ATCC 17029 / ATH 2.4.9) (Rhodobacter sphaeroides).